We begin with the raw amino-acid sequence, 408 residues long: LL-diaminopimelate aminotransferase (408 aa).

Substrate contacts are provided by tyrosine 15 and glycine 42. Pyridoxal 5'-phosphate contacts are provided by residues tyrosine 72, 108–109 (SK), tyrosine 132, asparagine 187, tyrosine 218, and 246–248 (SFS). The substrate site is built by lysine 109, tyrosine 132, and asparagine 187. Residue lysine 249 is modified to N6-(pyridoxal phosphate)lysine. Arginine 257 and asparagine 292 together coordinate pyridoxal 5'-phosphate. The substrate site is built by asparagine 292 and arginine 388.

This sequence belongs to the class-I pyridoxal-phosphate-dependent aminotransferase family. LL-diaminopimelate aminotransferase subfamily. As to quaternary structure, homodimer. Pyridoxal 5'-phosphate is required as a cofactor.

The catalysed reaction is (2S,6S)-2,6-diaminopimelate + 2-oxoglutarate = (S)-2,3,4,5-tetrahydrodipicolinate + L-glutamate + H2O + H(+). It participates in amino-acid biosynthesis; L-lysine biosynthesis via DAP pathway; LL-2,6-diaminopimelate from (S)-tetrahydrodipicolinate (aminotransferase route): step 1/1. Functionally, involved in the synthesis of meso-diaminopimelate (m-DAP or DL-DAP), required for both lysine and peptidoglycan biosynthesis. Catalyzes the direct conversion of tetrahydrodipicolinate to LL-diaminopimelate. This chain is LL-diaminopimelate aminotransferase, found in Leptospira borgpetersenii serovar Hardjo-bovis (strain JB197).